We begin with the raw amino-acid sequence, 292 residues long: Cyclin-dependent-like kinase 5 (292 aa).

One can recognise a Protein kinase domain in the interval 4–286; sequence YDKMEKIGEG…ADAALRHAYF (283 aa). Residues 10–18 and Lys33 each bind ATP; that span reads IGEGTYGTV. Catalysis depends on Asp126, which acts as the Proton acceptor. Residues Asn131 and Asp144 each contribute to the Mg(2+) site.

It belongs to the protein kinase superfamily. CMGC Ser/Thr protein kinase family. CDC2/CDKX subfamily. Heterodimer composed of a catalytic subunit cdk-5 and a regulatory subunit cdka-1. Interaction with cdka-1 is required for cdk-5 activation. Mg(2+) is required as a cofactor.

The protein localises to the cytoplasm. It is found in the cell projection. Its subcellular location is the dendrite. The enzyme catalyses L-seryl-[protein] + ATP = O-phospho-L-seryl-[protein] + ADP + H(+). It carries out the reaction L-threonyl-[protein] + ATP = O-phospho-L-threonyl-[protein] + ADP + H(+). Functionally, proline-directed serine/threonine-protein kinase which, in several motor neurons, promotes the polarized trafficking of synaptic vesicles and dense-core vesicles (DCV). In the ventral nerve cord, phosphorylates lin-10 and thereby prevents lin-10-mediated anterograde trafficking of the glutamate receptor glr-1. Involved in the inhibition of glr-1 trafficking in hypoxic conditions. In DA motor neurons but not in DB motor neurons, regulates axonal transport of synaptic vesicle precursors by inhibiting dynein-mediated retrograde transport. Regulates the trafficking of dense-core vesicles in DA and DB motor neurons by promoting anterograde trafficking to the axon and preventing dynein-dependent trafficking to the dendrite. May regulate these processes in association with cdka-1/p35. Activity may be regulated by cyy-1. Involved in synapse formation during DD motor neuron remodeling by regulating transport of disassembled synaptic material to the new synaptic sites probably by activating the motor protein unc-104/kinesin-3. Regulates microtubule polarity in the dendrite of DB motor neurons. May also play a role in GABAergic synaptic vesicle localization in the ventral nerve cord. In Caenorhabditis elegans, this protein is Cyclin-dependent-like kinase 5.